The sequence spans 211 residues: ATP-dependent Clp protease proteolytic subunit (211 aa).

The active-site Nucleophile is the Ser-106. His-131 is a catalytic residue.

This sequence belongs to the peptidase S14 family. Fourteen ClpP subunits assemble into 2 heptameric rings which stack back to back to give a disk-like structure with a central cavity, resembling the structure of eukaryotic proteasomes.

It is found in the cytoplasm. It catalyses the reaction Hydrolysis of proteins to small peptides in the presence of ATP and magnesium. alpha-casein is the usual test substrate. In the absence of ATP, only oligopeptides shorter than five residues are hydrolyzed (such as succinyl-Leu-Tyr-|-NHMec, and Leu-Tyr-Leu-|-Tyr-Trp, in which cleavage of the -Tyr-|-Leu- and -Tyr-|-Trp bonds also occurs).. Functionally, cleaves peptides in various proteins in a process that requires ATP hydrolysis. Has a chymotrypsin-like activity. Plays a major role in the degradation of misfolded proteins. This chain is ATP-dependent Clp protease proteolytic subunit, found in Rhodopseudomonas palustris (strain BisA53).